The sequence spans 1480 residues: Nonribosomal peptide synthetase-like enzyme fsqF (1480 aa).

A disordered region spans residues 31–59 (SPFADEPSIDVPSTHLPVVTPRSKTANDR). The interval 132–527 (DSARATPHAP…VGRTDDQVKY (396 aa)) is adenylation domain. The Carrier domain maps to 662–741 (STARTIAREY…SIASLIDANS (80 aa)). An O-(pantetheine 4'-phosphoryl)serine modification is found at Ser700. Positions 739–754 (ANSSPGRGQPLNTQET) are enriched in polar residues. The disordered stretch occupies residues 739–773 (ANSSPGRGQPLNTQETARLPLRSNGPAPSQQALER). Residues 780-1003 (LTGASGFLGI…ACVELGFYNG (224 aa)) are NAD-binding domain. The aminotransferase domain stretch occupies residues 1100–1465 (NAAGTVVHRE…YNTVAEVQEF (366 aa)).

This sequence belongs to the NRP synthetase family.

It functions in the pathway secondary metabolite biosynthesis. Its function is as follows. Nonribosomal peptide synthetase-like enzyme; part of the gene cluster that mediates the biosynthesis of the isoquinoline alkaloids fumisoquin A, fumisoquin B and fumisoquin C; as well as small amounts of fumipyrrole as a shunt metabolite. The products of the cluster lead to a brown coloration and are important for growth and conidiation. The nonribosomal peptide synthetase-like protein fsqF, which lacks a canonical condensation domain, is required for addition of a serine-derived dehydroalanine moiety to activated tyrosine but is not essential for the subsequent steps leading to isoquinoline formation. A different enzyme, most likely the ATP-grasp enzyme fsqD, is responsible for activation of tyrosine. Three additional enzymes encoded by the fsq cluster, the N-methyltransferase fsqC, the phenol 2-monooxygenase fsqG and the FAD-dependent oxidase fsqB, catalyze the formation of the isoquinoline ring system in the fumisoquins. FsqB converts the fspF thiolation domain-bound (2S,4S,5S)-2-amino-6-(3,4-dihydroxyphenyl)-4-hydroxy-5-(methylamino)hexanoyl into isoquinoline. The cyclization most likely proceeds via a two-step mechanism, beginning with FAD-dependent oxidation of the methyl group to an iminium species followed by electrophilic attack on the deprotonated phenol. The protein is Nonribosomal peptide synthetase-like enzyme fsqF of Aspergillus fumigatus (strain ATCC MYA-4609 / CBS 101355 / FGSC A1100 / Af293) (Neosartorya fumigata).